The chain runs to 160 residues: 2-C-methyl-D-erythritol 2,4-cyclodiphosphate synthase (160 aa).

A divalent metal cation is bound by residues D9 and H11. 4-CDP-2-C-methyl-D-erythritol 2-phosphate is bound by residues 9–11 and 35–36; these read DVH and HS. H43 contacts a divalent metal cation. Residues 57 to 59, 62 to 66, 101 to 107, 133 to 136, F140, and R143 contribute to the 4-CDP-2-C-methyl-D-erythritol 2-phosphate site; these read DIG, FPDTD, AEAPKMA, and TTSE.

Belongs to the IspF family. Homotrimer. It depends on a divalent metal cation as a cofactor.

It catalyses the reaction 4-CDP-2-C-methyl-D-erythritol 2-phosphate = 2-C-methyl-D-erythritol 2,4-cyclic diphosphate + CMP. Its pathway is isoprenoid biosynthesis; isopentenyl diphosphate biosynthesis via DXP pathway; isopentenyl diphosphate from 1-deoxy-D-xylulose 5-phosphate: step 4/6. In terms of biological role, involved in the biosynthesis of isopentenyl diphosphate (IPP) and dimethylallyl diphosphate (DMAPP), two major building blocks of isoprenoid compounds. Catalyzes the conversion of 4-diphosphocytidyl-2-C-methyl-D-erythritol 2-phosphate (CDP-ME2P) to 2-C-methyl-D-erythritol 2,4-cyclodiphosphate (ME-CPP) with a corresponding release of cytidine 5-monophosphate (CMP). This Methylobacillus flagellatus (strain ATCC 51484 / DSM 6875 / VKM B-1610 / KT) protein is 2-C-methyl-D-erythritol 2,4-cyclodiphosphate synthase.